A 346-amino-acid chain; its full sequence is [LysW]-lysine/[LysW]-ornithine hydrolase (346 aa).

His-68 provides a ligand contact to Zn(2+). The active site involves Asp-70. Asp-92 is a binding site for Zn(2+). Glu-122 (proton acceptor) is an active-site residue. Zn(2+) contacts are provided by Glu-123, Glu-146, and His-317.

It belongs to the peptidase M20A family. LysK subfamily. Zn(2+) serves as cofactor. Requires Co(2+) as cofactor.

Its subcellular location is the cytoplasm. The catalysed reaction is [amino-group carrier protein]-C-terminal-gamma-(L-lysyl)-L-glutamate + H2O = [amino-group carrier protein]-C-terminal-L-glutamate + L-lysine. It catalyses the reaction [amino-group carrier protein]-C-terminal-gamma-(L-ornithyl)-L-glutamate + H2O = [amino-group carrier protein]-C-terminal-L-glutamate + L-ornithine. It participates in amino-acid biosynthesis; L-lysine biosynthesis via AAA pathway; L-lysine from L-alpha-aminoadipate (Thermus route): step 5/5. The protein operates within amino-acid biosynthesis; L-arginine biosynthesis. In terms of biological role, catalyzes the release of L-lysine from [LysW]-gamma-L-lysine and the release of L-ornithine from [LysW]-L-ornithine. The chain is [LysW]-lysine/[LysW]-ornithine hydrolase from Saccharolobus solfataricus (strain ATCC 35092 / DSM 1617 / JCM 11322 / P2) (Sulfolobus solfataricus).